The following is a 537-amino-acid chain: Senescence-associated carboxylesterase 101 (537 aa).

A signal peptide spans 1–27; sequence MESSSSLKGSALGKLVVTSGLLHSSWS. A helical transmembrane segment spans residues 140–160; the sequence is VIITGAALGGSVASLYTLWLL.

In terms of assembly, part of a nuclear complex made of EDS1, PAD4 and SAG101, that can be redirected to the cytoplasm in the presence of an extranuclear form of EDS1. Interacts directly with EDS1. In terms of tissue distribution, expressed in senescing leaves.

It localises to the membrane. Its subcellular location is the nucleus. The protein localises to the cytoplasm. The catalysed reaction is a carboxylic ester + H2O = an alcohol + a carboxylate + H(+). In terms of biological role, acyl hydrolase that triggers the leaf senescence onset. Can use triolein as substrate to produce oleic acids. Its function is as follows. Involved in the EDS1-dependent intrinsic and indispensable resistance signaling pathway; together with PAD4, required for programmed cell death triggered by RPS4 in response to avirulent pathogens (e.g. P.syringae pv. tomato strain DC3000 and H.parasitica isolates CALA2 and EMWA1) and in restricting the growth of virulent pathogens (e.g. H.parasitica isolates NOCO2 and P.syringae pv. tomato strain DC3000 avrRps4). Contributes in reinforcing the immune response around hypersensitive response foci. Regulates the nuclear localization of EDS1. Essential for the RPP8/HRT-mediated resistance to the turnip crinkle virus (TCV). Involved in the post-invasion resistance to P.pachyrhizi in the mesophyll. This is Senescence-associated carboxylesterase 101 (SAG101) from Arabidopsis thaliana (Mouse-ear cress).